Here is a 117-residue protein sequence, read N- to C-terminus: Multidrug resistance protein EbrB (117 aa).

4 helical membrane-spanning segments follow: residues 3-23 (GLLY…MLKL), 31-51 (WPIA…SFSL), 59-79 (AYAT…FLLF), and 81-101 (ETIS…VVVL).

Belongs to the drug/metabolite transporter (DMT) superfamily. Small multidrug resistance (SMR) (TC 2.A.7.1) family. EbrA/EbrB subfamily. In terms of assembly, the efflux pump is composed of EbrA and EbrB.

It localises to the cell membrane. Its function is as follows. Part of a multidrug efflux pump. Confers resistance to cationic lipophilic dyes such as ethidium bromide, acriflavine, pyronine Y and safranin O. The efflux is probably coupled to an influx of protons. The protein is Multidrug resistance protein EbrB (ebrB) of Bacillus subtilis (strain 168).